The primary structure comprises 191 residues: 3-isopropylmalate dehydratase small subunit (191 aa).

This sequence belongs to the LeuD family. LeuD type 1 subfamily. As to quaternary structure, heterodimer of LeuC and LeuD.

The enzyme catalyses (2R,3S)-3-isopropylmalate = (2S)-2-isopropylmalate. Its pathway is amino-acid biosynthesis; L-leucine biosynthesis; L-leucine from 3-methyl-2-oxobutanoate: step 2/4. Functionally, catalyzes the isomerization between 2-isopropylmalate and 3-isopropylmalate, via the formation of 2-isopropylmaleate. In Staphylococcus saprophyticus subsp. saprophyticus (strain ATCC 15305 / DSM 20229 / NCIMB 8711 / NCTC 7292 / S-41), this protein is 3-isopropylmalate dehydratase small subunit.